The primary structure comprises 501 residues: L-arabinose isomerase (501 aa).

4 residues coordinate Mn(2+): Glu306, Glu333, His350, and His450.

The protein belongs to the arabinose isomerase family. Homohexamer. Mn(2+) is required as a cofactor.

The enzyme catalyses beta-L-arabinopyranose = L-ribulose. The protein operates within carbohydrate degradation; L-arabinose degradation via L-ribulose; D-xylulose 5-phosphate from L-arabinose (bacterial route): step 1/3. Its function is as follows. Catalyzes the conversion of L-arabinose to L-ribulose. The polypeptide is L-arabinose isomerase (Erwinia tasmaniensis (strain DSM 17950 / CFBP 7177 / CIP 109463 / NCPPB 4357 / Et1/99)).